Here is a 218-residue protein sequence, read N- to C-terminus: Zinc finger BED domain-containing protein 2 (218 aa).

A compositionally biased stretch (acidic residues) spans 1–11 (MMRREDEEEEG). The interval 1–24 (MMRREDEEEEGTMMKAKGDLEMKE) is disordered. The BED-type zinc finger occupies 52-113 (TRFSEAWEYF…SMHREELEKS (62 aa)). Cys-78, Cys-81, His-101, and His-106 together coordinate Zn(2+). The segment at 104–137 (SMHREELEKSGHGQAGQRQDPRPHGPQLPTGIEG) is disordered. A compositionally biased stretch (basic and acidic residues) spans 105–114 (MHREELEKSG).

Expressed in keratinocytes.

It is found in the nucleus. Transcriptional regulator which has intrinsic repressor activity and which competes with the transcriptional activator IRF1 for binding to the 5'-[CA]GAA[AC]C[CT]-3' consensus sequence in gene promoters. May thereby play a role in keratinocyte differentiation. In Homo sapiens (Human), this protein is Zinc finger BED domain-containing protein 2 (ZBED2).